We begin with the raw amino-acid sequence, 638 residues long: Neuroendocrine convertase 2 (638 aa).

The first 25 residues, 1-25, serve as a signal peptide directing secretion; that stretch reads MKGGCVSQWKAAAGFLFCVMVFASA. A propeptide spanning residues 26–109 is cleaved from the precursor; the sequence is ERPVFTNHFL…QQEGFDRKKR (84 aa). A Peptidase S8 domain is found at 129-453; sequence QWYLINTGQA…YGVLDAGAMV (325 aa). Active-site charge relay system residues include D167 and H208. 2 disulfide bridges follow: C225–C376 and C317–C347. N375 carries N-linked (GlcNAc...) asparagine glycosylation. Catalysis depends on S384, which acts as the Charge relay system. Residues 461–597 form the P/Homo B domain; that stretch reads TVPERFHCVG…TLMLHGTQSA (137 aa). Residues C468 and C494 are joined by a disulfide bond. N514 and N524 each carry an N-linked (GlcNAc...) asparagine glycan.

It belongs to the peptidase S8 family. Furin subfamily.

It is found in the cytoplasmic vesicle. The protein resides in the secretory vesicle. Its subcellular location is the secreted. The catalysed reaction is Release of protein hormones and neuropeptides from their precursors, generally by hydrolysis of -Lys-Arg-|- bonds.. In terms of biological role, serine endopeptidase which is involved in the processing of hormone and other protein precursors at sites comprised of pairs of basic amino acid residues. Responsible for the release of glucagon from proglucagon in pancreatic A cells. This is Neuroendocrine convertase 2 (PCSK2) from Pongo abelii (Sumatran orangutan).